Here is a 168-residue protein sequence, read N- to C-terminus: Photosystem I assembly protein Ycf3 (168 aa).

TPR repeat units lie at residues 35–68 (AFTY…EIDP), 72–105 (SYIL…NPFL), and 120–153 (GEQA…TPGN).

It belongs to the Ycf3 family.

It localises to the plastid. It is found in the chloroplast thylakoid membrane. Functionally, essential for the assembly of the photosystem I (PSI) complex. May act as a chaperone-like factor to guide the assembly of the PSI subunits. The protein is Photosystem I assembly protein Ycf3 of Ipomoea purpurea (Common morning glory).